Consider the following 863-residue polypeptide: Glycerol-3-phosphate acyltransferase (863 aa).

The disordered stretch occupies residues 1 to 29 (MPKKNSPLLPKETTTTQSSVDTSGSSNLT). The segment covering 12-29 (ETTTTQSSVDTSGSSNLT) has biased composition (polar residues). The HXXXXD motif signature appears at 343 to 348 (SHRSHM).

It belongs to the GPAT/DAPAT family.

Its subcellular location is the cell inner membrane. It catalyses the reaction sn-glycerol 3-phosphate + an acyl-CoA = a 1-acyl-sn-glycero-3-phosphate + CoA. It participates in phospholipid metabolism; CDP-diacylglycerol biosynthesis; CDP-diacylglycerol from sn-glycerol 3-phosphate: step 1/3. The protein is Glycerol-3-phosphate acyltransferase of Xylella fastidiosa (strain M23).